The following is a 308-amino-acid chain: D-alanine--D-alanine ligase B (308 aa).

Residues K102–E302 enclose the ATP-grasp domain. P128–T183 lines the ATP pocket. 3 residues coordinate Mg(2+): D252, E269, and N271.

It belongs to the D-alanine--D-alanine ligase family. Requires Mg(2+) as cofactor. It depends on Mn(2+) as a cofactor.

It localises to the cytoplasm. It carries out the reaction 2 D-alanine + ATP = D-alanyl-D-alanine + ADP + phosphate + H(+). It participates in cell wall biogenesis; peptidoglycan biosynthesis. Functionally, cell wall formation. This Mesorhizobium japonicum (strain LMG 29417 / CECT 9101 / MAFF 303099) (Mesorhizobium loti (strain MAFF 303099)) protein is D-alanine--D-alanine ligase B.